The following is a 151-amino-acid chain: Large ribosomal subunit protein bL9 (151 aa).

It belongs to the bacterial ribosomal protein bL9 family.

Its function is as follows. Binds to the 23S rRNA. The protein is Large ribosomal subunit protein bL9 of Chlorobium limicola (strain DSM 245 / NBRC 103803 / 6330).